We begin with the raw amino-acid sequence, 901 residues long: HTH-type transcriptional regulator MalT (901 aa).

39–46 contacts ATP; it reads SPAGYGKT. The HTH luxR-type domain occupies 829–894; that stretch reads ELIRTSPLTQ…AAVQHAQKLL (66 aa). A DNA-binding region (H-T-H motif) is located at residues 853–872; that stretch reads NEQIAGELEVAATTIKTHIR.

The protein belongs to the MalT family. In terms of assembly, monomer in solution. Oligomerizes to an active state in the presence of the positive effectors ATP and maltotriose.

With respect to regulation, activated by ATP and maltotriose, which are both required for DNA binding. Functionally, positively regulates the transcription of the maltose regulon whose gene products are responsible for uptake and catabolism of malto-oligosaccharides. Specifically binds to the promoter region of its target genes, recognizing a short DNA motif called the MalT box. The sequence is that of HTH-type transcriptional regulator MalT from Escherichia coli O45:K1 (strain S88 / ExPEC).